A 343-amino-acid polypeptide reads, in one-letter code: Methionine import ATP-binding protein MetN 1 (343 aa).

An ABC transporter domain is found at 2–241; that stretch reads IKLSNITKVF…PKTPLAQKFI (240 aa). 38-45 serves as a coordination point for ATP; that stretch reads GASGAGKS.

It belongs to the ABC transporter superfamily. Methionine importer (TC 3.A.1.24) family. The complex is composed of two ATP-binding proteins (MetN), two transmembrane proteins (MetI) and a solute-binding protein (MetQ).

The protein localises to the cell inner membrane. The catalysed reaction is L-methionine(out) + ATP + H2O = L-methionine(in) + ADP + phosphate + H(+). The enzyme catalyses D-methionine(out) + ATP + H2O = D-methionine(in) + ADP + phosphate + H(+). Functionally, part of the ABC transporter complex MetNIQ involved in methionine import. Responsible for energy coupling to the transport system. In Salmonella typhi, this protein is Methionine import ATP-binding protein MetN 1.